A 555-amino-acid chain; its full sequence is Potassium-transporting ATPase potassium-binding subunit (555 aa).

The next 10 helical transmembrane spans lie at 2–22, 60–80, 130–150, 173–193, 246–266, 278–298, 374–394, 412–432, 483–503, and 525–545; these read IWVA…PTGI, QYAL…YFIF, IGIT…VMAF, VFLP…VPQT, MSNI…PFTY, ILFV…TTSE, AGFV…GLMV, LIAV…ALAL, LVMF…AASL, and GIFI…MLVL.

The protein belongs to the KdpA family. The system is composed of three essential subunits: KdpA, KdpB and KdpC.

It localises to the cell membrane. In terms of biological role, part of the high-affinity ATP-driven potassium transport (or Kdp) system, which catalyzes the hydrolysis of ATP coupled with the electrogenic transport of potassium into the cytoplasm. This subunit binds the extracellular potassium ions and delivers the ions to the membrane domain of KdpB through an intramembrane tunnel. The sequence is that of Potassium-transporting ATPase potassium-binding subunit from Bacillus cereus (strain ZK / E33L).